A 304-amino-acid chain; its full sequence is Putative F-box/LRR-repeat protein 21 (304 aa).

The region spanning 43–90 (RRNWVDLPPELTTSILLRLSLTDILDNAQKVCKEWRRICKDPSMWRKI) is the F-box domain. LRR repeat units lie at residues 132 to 159 (LSYI…GVVN), 173 to 198 (THSC…KLNS), 218 to 241 (GPLE…HLQL), and 243 to 268 (ANRL…DVRK).

In Arabidopsis thaliana (Mouse-ear cress), this protein is Putative F-box/LRR-repeat protein 21 (FBL21).